Here is a 171-residue protein sequence, read N- to C-terminus: Myosin regulatory light polypeptide 9 (171 aa).

Over residues 1 to 15 (MSSKRAKAKTTKKRP) the composition is skewed to basic residues. A disordered region spans residues 1 to 21 (MSSKRAKAKTTKKRPQSATSN). Ser-2 is subject to N-acetylserine. Thr-19 is modified (phosphothreonine; by MLCK, CIT and ROCK2). Ser-20 carries the phosphoserine; by CDC42BP, CIT, MLCK, PAK1, ROCK1, ROCK2, DAPK1, DAPK2 and ZIPK/DAPK3 modification. EF-hand domains follow at residues 29–64 (SQIQ…LGKN) and 98–133 (DPED…MGDR). The Ca(2+) site is built by Asp-42, Asn-44, Asp-46, and Asp-53.

As to quaternary structure, myosin is a hexamer of 2 heavy chains and 4 light chains: interacts with myosin heavy chain MYO19. Interacts with LUZP1; the interaction results in inhibition of phosphorylation of MYL9 by DAPK3. Post-translationally, phosphorylation increases the actin-activated myosin ATPase activity and thereby regulates the contractile activity. It is required to generate the driving force in the migration of the cells but not necessary for localization of myosin-2 at the leading edge. Phosphorylation is required for myotube formation. Phosphorylated by DAPK3; DAPK3-mediated phosphorylation is inhibited by LUZP1. In terms of tissue distribution, smooth muscle tissues and in some, but not all, nonmuscle cells.

It is found in the cytoplasm. The protein localises to the cytoskeleton. It localises to the cell cortex. Its function is as follows. Myosin regulatory subunit that plays an important role in regulation of both smooth muscle and nonmuscle cell contractile activity via its phosphorylation. Implicated in cytokinesis, receptor capping, and cell locomotion. In myoblasts, may regulate PIEZO1-dependent cortical actomyosin assembly involved in myotube formation. The sequence is that of Myosin regulatory light polypeptide 9 (Myl9) from Rattus norvegicus (Rat).